Reading from the N-terminus, the 501-residue chain is NAD(P)H-quinone oxidoreductase chain 4, chloroplastic (501 aa).

14 consecutive transmembrane segments (helical) span residues 5 to 25 (FPWL…IFFL), 38 to 58 (ICIC…HFQL), 85 to 105 (GLSI…TLAA), 112 to 130 (SRLF…IGSF), 135 to 155 (LLLF…LLAM), 168 to 188 (FILY…GIGL), 209 to 229 (ALEI…LPII), 243 to 263 (HYST…YGLV), 275 to 295 (SIFS…AALT), 306 to 326 (IAYS…SITD), 331 to 351 (GAIL…FLAG), 387 to 407 (LALP…GIIT), 417 to 437 (ILIT…LLSM), and 463 to 483 (LFVS…PDFV).

This sequence belongs to the complex I subunit 4 family.

Its subcellular location is the plastid. It is found in the chloroplast thylakoid membrane. It carries out the reaction a plastoquinone + NADH + (n+1) H(+)(in) = a plastoquinol + NAD(+) + n H(+)(out). It catalyses the reaction a plastoquinone + NADPH + (n+1) H(+)(in) = a plastoquinol + NADP(+) + n H(+)(out). The polypeptide is NAD(P)H-quinone oxidoreductase chain 4, chloroplastic (Eucalyptus globulus subsp. globulus (Tasmanian blue gum)).